A 145-amino-acid chain; its full sequence is Large ribosomal subunit protein uL13 (145 aa).

Belongs to the universal ribosomal protein uL13 family. In terms of assembly, part of the 50S ribosomal subunit.

This protein is one of the early assembly proteins of the 50S ribosomal subunit, although it is not seen to bind rRNA by itself. It is important during the early stages of 50S assembly. This chain is Large ribosomal subunit protein uL13, found in Staphylococcus saprophyticus subsp. saprophyticus (strain ATCC 15305 / DSM 20229 / NCIMB 8711 / NCTC 7292 / S-41).